Reading from the N-terminus, the 670-residue chain is Probable urocanate hydratase (670 aa).

NAD(+)-binding positions include 126 to 127, Q204, 250 to 252, E270, 316 to 317, 338 to 342, 349 to 350, Y398, and G590; these read GG, GMS, NV, QTSLH, and FY.

The protein belongs to the urocanase family. NAD(+) serves as cofactor.

The catalysed reaction is 4-imidazolone-5-propanoate = trans-urocanate + H2O. It functions in the pathway amino-acid degradation; L-histidine degradation into L-glutamate; N-formimidoyl-L-glutamate from L-histidine: step 2/3. This Caenorhabditis elegans protein is Probable urocanate hydratase.